Reading from the N-terminus, the 1409-residue chain is MAP kinase-activating death domain protein (1409 aa).

Residues 26–230 form the uDENN domain; it reads RGASQSSPDA…VPVPGKTKVQ (205 aa). Residues 251–390 enclose the cDENN domain; that stretch reads RFTLIDFPLH…DATHLKERLK (140 aa). The region spanning 392-496 is the dDENN domain; it reads AINKMTTMTV…ECCLCPKNET (105 aa). 4 disordered regions span residues 654–701, 761–784, 902–1008, and 1015–1034; these read SFDH…MKGL, QHIV…QSKN, SSSA…KVKT, and PQNL…SFLA. Polar residues-rich tracts occupy residues 680-691 and 761-772; these read SDASDTPTSRGS and QHIVRSKTQPNP. Low complexity-rich tracts occupy residues 773–784 and 902–913; these read TSQQTANQQSKN and SSSAPSTMTTPS. Residues 915 to 925 are compositionally biased toward basic and acidic residues; the sequence is HSNDILKESRP. Residues 941–961 are compositionally biased toward polar residues; that stretch reads LGQNVTPTSTNNHEIAQSTRS. Positions 963 to 1003 are enriched in pro residues; sequence ALPPPVPPREAPPIPKRNPPPLGAPPKVPEGARAPPPLPPR. A compositionally biased stretch (low complexity) spans 1020–1031; that stretch reads PNNQPAQPSSPS. One can recognise a Death domain in the interval 1109–1184; sequence GMDQEPSEMI…GLVCSKEINK (76 aa).

It belongs to the MADD family. In terms of assembly, interacts with cab-1. As to expression, expressed in nearly all neurons.

It is found in the cell membrane. Its subcellular location is the cytoplasm. Functionally, guanyl-nucleotide exchange factor that regulates small GTPases. Converts GDP-bound inactive form of rab-3 and cab-1 to the GTP-bound active forms. Regulator of presynaptic activity that interacts with rab-3 to regulate synaptic vesicle release. Is also a regulator of the cab-1 synaptic transmission pathway. Probably by converting rab-3 to its GTP-bound active form, plays a role in the recruitment of endophilin unc-57 to synaptic vesicles. Probably by activating rab-3 and thus regulating the trafficking of dense-core vesicles, plays a role in AVG neuron-mediated formation of the right axon tract of the ventral nerve cord. Regulates anterior body muscle contractions (aBOC) and the expulsion steps during the defecation motor program (DMP). Probably by regulating DMP, required for fatty acid uptake by intestinal cells. The sequence is that of MAP kinase-activating death domain protein (aex-3) from Caenorhabditis elegans.